The sequence spans 398 residues: Cathepsin D (398 aa).

The first 20 residues, 1 to 20 (MAPRGLLVLLLLALVGPCAA), serve as a signal peptide directing secretion. Positions 21-63 (LIRIPLTKFTSTRRMLTEVGSEIPDMNAITQFLKFKLGFADLA) are cleaved as a propeptide — activation peptide. Residues 78–395 (YYGEIGIGTP…DRDNDSVGFA (318 aa)) form the Peptidase A1 domain. Residue aspartate 96 is part of the active site. Residues cysteine 109 and cysteine 116 are joined by a disulfide bond. 2 N-linked (GlcNAc...) asparagine glycosylation sites follow: asparagine 133 and asparagine 251. An intrachain disulfide couples cysteine 274 to cysteine 278. The active site involves aspartate 283. A disulfide bridge connects residues cysteine 317 and cysteine 354.

The protein belongs to the peptidase A1 family. In terms of assembly, consists of a light chain and a heavy chain. Oocytic yolk, preovulatory follicles, liver.

Its subcellular location is the lysosome. The catalysed reaction is Specificity similar to, but narrower than, that of pepsin A. Does not cleave the 4-Gln-|-His-5 bond in B chain of insulin.. Its function is as follows. Acid protease active in intracellular protein breakdown. In chicken it is a key enzyme for yolk formation as it is capable of catalyzing intra oocytic break down of protein components of both vitellogenin and VLDL. The polypeptide is Cathepsin D (CTSD) (Gallus gallus (Chicken)).